The sequence spans 227 residues: Protein FAM3C (227 aa).

The first 24 residues, 1–24 (MRVAGAAKLVVAVAVFLLTFYVIS), serve as a signal peptide directing secretion. 2 disulfide bridges follow: cysteine 58-cysteine 86 and cysteine 64-cysteine 221. The 159-residue stretch at 67-225 (KHFAFKMASG…VEMEGCIPQK (159 aa)) folds into the GG-type lectin domain.

Belongs to the FAM3 family.

Its subcellular location is the secreted. The protein resides in the cytoplasmic vesicle. Its function is as follows. May be involved in retinal laminar formation. Promotes epithelial to mesenchymal transition. This is Protein FAM3C (Fam3c) from Rattus norvegicus (Rat).